The chain runs to 1861 residues: Protein TANC1 (1861 aa).

N-acetylmethionine is present on M1. 5 disordered regions span residues 1–46, 63–99, 206–225, 257–311, and 439–486; these read MLKA…SSLP, SLPS…ESPR, KSPC…KDSG, QKGV…MPRP, and QIAS…ISAE. Residues 8 to 21 show a composition bias toward basic and acidic residues; the sequence is KSREGGKGGKKEAG. S63, S66, S67, S207, and S270 each carry phosphoserine. A compositionally biased stretch (polar residues) spans 206–219; that stretch reads KSPCETISSPSSTL. The span at 440–455 shows a compositional bias: polar residues; sequence IASNSPGSSPKTSDPT. Residues 461–480 are compositionally biased toward low complexity; sequence TPLLSPSSSTSASSTAKTPL. Residue S465 is modified to Phosphoserine. 11 ANK repeats span residues 896 to 928, 934 to 963, 967 to 996, 1000 to 1029, 1040 to 1069, 1078 to 1107, 1111 to 1140, 1144 to 1173, 1177 to 1206, 1210 to 1239, and 1243 to 1272; these read EGLS…NVNY, NNAP…CLDG, NGMT…RVDH, KGQC…SPGP, ALQQ…EHEV, WGET…AVSR, RGVP…DVNL, QGRT…ALSS, EGLS…AIDQ, NGRT…VIEH, and SGMR…KLGN. TPR repeat units follow at residues 1289–1322, 1336–1369, and 1371–1403; these read LQKL…FPRE, VSLY…KPKS, and EAFY…CPTN. The segment covering 1421-1431 has biased composition (low complexity); it reads QRSQQQKQQGP. Disordered stretches follow at residues 1421 to 1485 and 1636 to 1696; these read QRSQ…SVPS and VAVD…KVQG. S1439 is subject to Phosphoserine. Low complexity-rich tracts occupy residues 1467–1485 and 1659–1689; these read QEES…SVPS and SLTS…SSFS. A phosphoserine mark is found at S1668, S1676, and S1677.

The protein belongs to the TANC family. As to quaternary structure, interacts probably directly with DLG1, DLG4, HOMER1. Interacts with DLGAP1, INA, CAMK2A, GRIN2B and GRIA1. Interacts with TNIK. Interacts with MINK1. In terms of processing, phosphorylated; by MINK1 and TNIK upon stimulation by RAP2A.

Its subcellular location is the postsynaptic density. May be a scaffold component in the postsynaptic density. This Homo sapiens (Human) protein is Protein TANC1 (TANC1).